Here is a 704-residue protein sequence, read N- to C-terminus: Serotransferrin (704 aa).

A signal peptide spans 1–19 (MRPAVRALLACAVLGLCLA). 2 consecutive Transferrin-like domains span residues 25–351 (VRWC…NLRE) and 364–689 (VKWC…NLRQ). 2 cysteine pairs are disulfide-bonded: cysteine 28–cysteine 66 and cysteine 38–cysteine 57. At arginine 42 the chain carries Dimethylated arginine. The Fe(3+) site is built by aspartate 81 and tyrosine 113. 5 cysteine pairs are disulfide-bonded: cysteine 136-cysteine 217, cysteine 176-cysteine 192, cysteine 179-cysteine 200, cysteine 189-cysteine 202, and cysteine 250-cysteine 264. Residues threonine 138, arginine 142, alanine 144, and glycine 145 each coordinate hydrogencarbonate. Tyrosine 211 serves as a coordination point for Fe(3+). Histidine 272 is a binding site for Fe(3+). Cystine bridges form between cysteine 362/cysteine 622, cysteine 367/cysteine 399, cysteine 377/cysteine 390, cysteine 424/cysteine 699, cysteine 441/cysteine 663, cysteine 473/cysteine 549, cysteine 497/cysteine 690, cysteine 507/cysteine 521, cysteine 518/cysteine 532, cysteine 589/cysteine 603, and cysteine 641/cysteine 646. Positions 414 and 449 each coordinate Fe(3+). Hydrogencarbonate-binding residues include threonine 475, arginine 479, alanine 481, and glycine 482. Residue asparagine 514 is glycosylated (N-linked (GlcNAc...) asparagine). Residue tyrosine 543 participates in Fe(3+) binding. A Fe(3+)-binding site is contributed by histidine 611. Position 691 is a phosphoserine (serine 691).

The protein belongs to the transferrin family. Monomer. Part of a complex composed of SLC40A1/ferroportin, TF/transferrin and HEPH/hephaestin that transfers iron from cells to transferrin. As to expression, expressed by the liver and secreted in plasma.

Its subcellular location is the secreted. Functionally, transferrins are iron binding transport proteins which can bind two Fe(3+) ions in association with the binding of an anion, usually bicarbonate. It is responsible for the transport of iron from sites of absorption and heme degradation to those of storage and utilization. Serum transferrin may also have a further role in stimulating cell proliferation. The sequence is that of Serotransferrin (TF) from Bos taurus (Bovine).